Here is a 1429-residue protein sequence, read N- to C-terminus: Dicer-like protein 2 (1429 aa).

The Helicase ATP-binding domain occupies 21 to 200; sequence MFEASLKGNI…TIEMNLNSVC (180 aa). Residue 34-41 coordinates ATP; sequence MGTGSGKT. The DEAH box signature appears at 141–144; the sequence is DEAH. One can recognise a Helicase C-terminal domain in the interval 335-501; the sequence is ALISFLMSTE…EDRRRTEELR (167 aa). In terms of domain architecture, Dicer dsRNA-binding fold spans 528-622; sequence AMQHLVHFCD…LPLTKSREFT (95 aa). RNase III domains lie at 874–1014 and 1056–1250; these read ATRL…IDGG and QENL…VDSG. Residues glutamate 1095, aspartate 1236, and glutamate 1239 each coordinate Mg(2+).

The protein belongs to the helicase family. Dicer subfamily. Mg(2+) serves as cofactor. Mn(2+) is required as a cofactor.

Dicer-like endonuclease involved in cleaving double-stranded RNA in the RNA interference (RNAi) pathway. Produces 21 to 25 bp dsRNAs (siRNAs) which target the selective destruction of homologous RNAs leading to sequence-specific suppression of gene expression, called post-transcriptional gene silencing (PTGS). Part of a broad host defense response against viral infection and transposons. The sequence is that of Dicer-like protein 2 (dcl2) from Emericella nidulans (strain FGSC A4 / ATCC 38163 / CBS 112.46 / NRRL 194 / M139) (Aspergillus nidulans).